A 57-amino-acid polypeptide reads, in one-letter code: UPF0391 membrane protein BRADO5617 (57 aa).

The next 2 membrane-spanning stretches (helical) occupy residues 1 to 21 and 30 to 50; these read MLGWVVTFLVIALIAGILGFG and IAKIIFFIAIVLFLVSAVVGL.

It belongs to the UPF0391 family.

The protein resides in the cell membrane. In Bradyrhizobium sp. (strain ORS 278), this protein is UPF0391 membrane protein BRADO5617.